The following is a 280-amino-acid chain: 4-hydroxy-3-methylbut-2-enyl diphosphate reductase (280 aa).

[4Fe-4S] cluster is bound at residue C12. H40 and H72 together coordinate (2E)-4-hydroxy-3-methylbut-2-enyl diphosphate. H40 and H72 together coordinate dimethylallyl diphosphate. Residues H40 and H72 each contribute to the isopentenyl diphosphate site. C94 contributes to the [4Fe-4S] cluster binding site. H122 contributes to the (2E)-4-hydroxy-3-methylbut-2-enyl diphosphate binding site. H122 contacts dimethylallyl diphosphate. Residue H122 participates in isopentenyl diphosphate binding. Catalysis depends on E124, which acts as the Proton donor. T160 contributes to the (2E)-4-hydroxy-3-methylbut-2-enyl diphosphate binding site. C188 lines the [4Fe-4S] cluster pocket. (2E)-4-hydroxy-3-methylbut-2-enyl diphosphate contacts are provided by S216, N218, and S260. Positions 216, 218, and 260 each coordinate dimethylallyl diphosphate. Isopentenyl diphosphate contacts are provided by S216, N218, and S260.

The protein belongs to the IspH family. [4Fe-4S] cluster is required as a cofactor.

It carries out the reaction isopentenyl diphosphate + 2 oxidized [2Fe-2S]-[ferredoxin] + H2O = (2E)-4-hydroxy-3-methylbut-2-enyl diphosphate + 2 reduced [2Fe-2S]-[ferredoxin] + 2 H(+). The catalysed reaction is dimethylallyl diphosphate + 2 oxidized [2Fe-2S]-[ferredoxin] + H2O = (2E)-4-hydroxy-3-methylbut-2-enyl diphosphate + 2 reduced [2Fe-2S]-[ferredoxin] + 2 H(+). It functions in the pathway isoprenoid biosynthesis; dimethylallyl diphosphate biosynthesis; dimethylallyl diphosphate from (2E)-4-hydroxy-3-methylbutenyl diphosphate: step 1/1. The protein operates within isoprenoid biosynthesis; isopentenyl diphosphate biosynthesis via DXP pathway; isopentenyl diphosphate from 1-deoxy-D-xylulose 5-phosphate: step 6/6. In terms of biological role, catalyzes the conversion of 1-hydroxy-2-methyl-2-(E)-butenyl 4-diphosphate (HMBPP) into a mixture of isopentenyl diphosphate (IPP) and dimethylallyl diphosphate (DMAPP). Acts in the terminal step of the DOXP/MEP pathway for isoprenoid precursor biosynthesis. This chain is 4-hydroxy-3-methylbut-2-enyl diphosphate reductase, found in Pelobacter propionicus (strain DSM 2379 / NBRC 103807 / OttBd1).